The primary structure comprises 367 residues: Phosphoribosylaminoimidazole-succinocarboxamide synthase (367 aa).

The protein belongs to the SAICAR synthetase family.

It carries out the reaction 5-amino-1-(5-phospho-D-ribosyl)imidazole-4-carboxylate + L-aspartate + ATP = (2S)-2-[5-amino-1-(5-phospho-beta-D-ribosyl)imidazole-4-carboxamido]succinate + ADP + phosphate + 2 H(+). Its pathway is purine metabolism; IMP biosynthesis via de novo pathway; 5-amino-1-(5-phospho-D-ribosyl)imidazole-4-carboxamide from 5-amino-1-(5-phospho-D-ribosyl)imidazole-4-carboxylate: step 1/2. The polypeptide is Phosphoribosylaminoimidazole-succinocarboxamide synthase (Shewanella sp. (strain ANA-3)).